Here is a 462-residue protein sequence, read N- to C-terminus: MPINSFENYPMSWKPSIDKAEKPIYKALAGQLEQDILNGVLLPGTKLPPQRELADYLDLNVSTISKAFKVCELKGLLSATVGSGTFVSYDALSNAYLLEDTKPTHLIEMGAILPDHASYEPLLYQLKNMVHEEDYEKWFSYGRAGESLWQKDAAVKLIQRGGFETSVDHILFANGGQNAIAATLASLCKPGDRIGVDHHTYPGLKTVASLLSVQIVPIKSENDEMSPESLEYACKNENIKGLYLIPDYHNPTTSFMSVENRRMVADIVKKYNLFVIEDASYHLLNKNPLPALASFAPQQVIHIASLSKSLAPGLRLAYVAVPRQYKEPISKALYNLNITVSPLLAELTARTIVSNQFEVLIESHREQTIRRNQLVNRYVAGYTCLGVETGIFRWLLLPGKMSGAEFEELAARLGVQVYAAERFVVGNSCPERAVRVSVCAPKTLEELEQGLMILRRLLDDLT.

Positions 22 to 90 (KPIYKALAGQ…VGSGTFVSYD (69 aa)) constitute an HTH gntR-type domain. Residues 50–69 (QRELADYLDLNVSTISKAFK) constitute a DNA-binding region (H-T-H motif). Lysine 308 is subject to N6-(pyridoxal phosphate)lysine.

This sequence in the C-terminal section; belongs to the class-I pyridoxal-phosphate-dependent aminotransferase family. Requires pyridoxal 5'-phosphate as cofactor.

This is an uncharacterized protein from Bacillus subtilis (strain 168).